A 576-amino-acid polypeptide reads, in one-letter code: Formate--tetrahydrofolate ligase 1 (576 aa).

69 to 76 (TPLGEGKT) serves as a coordination point for ATP.

Belongs to the formate--tetrahydrofolate ligase family.

The catalysed reaction is (6S)-5,6,7,8-tetrahydrofolate + formate + ATP = (6R)-10-formyltetrahydrofolate + ADP + phosphate. The protein operates within one-carbon metabolism; tetrahydrofolate interconversion. This chain is Formate--tetrahydrofolate ligase 1, found in Rubrobacter xylanophilus (strain DSM 9941 / JCM 11954 / NBRC 16129 / PRD-1).